The sequence spans 4924 residues: Hydroxamate-type ferrichrome siderophore peptide synthetase (4924 aa).

Carrier domains follow at residues 715 to 791 (NQSE…ILLK), 2172 to 2246 (DGFQ…KRRR), 3254 to 3328 (NVVE…NTQT), and 4402 to 4478 (IHLN…QYEK). An O-(pantetheine 4'-phosphoryl)serine mark is found at Ser-752, Ser-2206, Ser-3288, and Ser-4439.

The protein belongs to the ATP-dependent AMP-binding enzyme family.

The protein resides in the cytoplasm. Its function is as follows. Involved in intracellular and extracellular ferrichrome siderophore biosynthesis. The polypeptide is Hydroxamate-type ferrichrome siderophore peptide synthetase (sib1) (Schizosaccharomyces pombe (strain 972 / ATCC 24843) (Fission yeast)).